The primary structure comprises 358 residues: Putative glycylpeptide N-tetradecanoyltransferase (358 aa).

The protein belongs to the NMT family.

It carries out the reaction N-terminal glycyl-[protein] + tetradecanoyl-CoA = N-tetradecanoylglycyl-[protein] + CoA + H(+). Functionally, adds a myristoyl group to the N-terminal glycine residue of certain proteins. In Acanthamoeba polyphaga (Amoeba), this protein is Putative glycylpeptide N-tetradecanoyltransferase.